We begin with the raw amino-acid sequence, 333 residues long: Taste receptor type 2 member 38 (333 aa).

Topologically, residues 1-17 are extracellular; the sequence is MLTLTRIHTVSYEVRST. A helical membrane pass occupies residues 18-38; that stretch reads FLFISVLEFAVGFLTNAFVFL. Residues 39-55 lie on the Cytoplasmic side of the membrane; the sequence is VNFWDVVKRQPLSNSDC. The helical transmembrane segment at 56–76 threads the bilayer; it reads VLLCLSISRLFLHGLLFLSAI. Residues 77–94 are Extracellular-facing; the sequence is QLTHFQKLSEPLNHSYQA. The helical transmembrane segment at 95-115 threads the bilayer; the sequence is IIMLWMIANQANLWLAACLSL. Over 116–142 the chain is Cytoplasmic; that stretch reads LYCSKLIRFSHTFLICLASWVSRKISQ. Residues 143–163 form a helical membrane-spanning segment; sequence MLLGIILCSCICTVLCVWCFF. Residues 164–190 lie on the Extracellular side of the membrane; the sequence is SRPHFTVTTVLFMNNNTRLNWQIKDLN. N-linked (GlcNAc...) asparagine glycosylation occurs at N178. A helical transmembrane segment spans residues 191–211; it reads LFYSFLFCYLWSVPPFLLFLV. At 212 to 251 the chain is on the cytoplasmic side; sequence SSGMLTVSLGRHMRTMKVYTRDSRDPSLEAHIKALKSLVS. A helical membrane pass occupies residues 252–272; sequence FFCFFVISSCAAFISVPLLIL. Residues 273 to 276 lie on the Extracellular side of the membrane; it reads WRDK. The chain crosses the membrane as a helical span at residues 277-297; it reads IGVMVCVGIMAACPSGHAAVL. Residues 298-333 are Cytoplasmic-facing; the sequence is ISGNAKLRRAVTTILLWAQSSLKVRADHKADSRTLC.

It belongs to the G-protein coupled receptor T2R family.

It localises to the membrane. Functionally, receptor that may play a role in the perception of bitterness and is gustducin-linked. May play a role in sensing the chemical composition of the gastrointestinal content. The activity of this receptor may stimulate alpha gustducin, mediate PLC-beta-2 activation and lead to the gating of TRPM5. This chain is Taste receptor type 2 member 38 (TAS2R38), found in Pan troglodytes (Chimpanzee).